Reading from the N-terminus, the 203-residue chain is Recombination protein RecR (203 aa).

The C4-type zinc finger occupies 57–72; that stretch reads CARCNTFSETELCVLC. The Toprim domain maps to 80 to 175; sequence DVLCVVEMPA…SVSRIARGLP (96 aa).

The protein belongs to the RecR family.

Functionally, may play a role in DNA repair. It seems to be involved in an RecBC-independent recombinational process of DNA repair. It may act with RecF and RecO. The protein is Recombination protein RecR of Laribacter hongkongensis (strain HLHK9).